The following is a 547-amino-acid chain: Chaperonin GroEL (547 aa).

ATP is bound by residues 30–33 (TLGP), Lys-51, 87–91 (DGTTT), Gly-415, and Asp-495.

The protein belongs to the chaperonin (HSP60) family. As to quaternary structure, forms a cylinder of 14 subunits composed of two heptameric rings stacked back-to-back. Interacts with the co-chaperonin GroES.

Its subcellular location is the cytoplasm. It carries out the reaction ATP + H2O + a folded polypeptide = ADP + phosphate + an unfolded polypeptide.. In terms of biological role, together with its co-chaperonin GroES, plays an essential role in assisting protein folding. The GroEL-GroES system forms a nano-cage that allows encapsulation of the non-native substrate proteins and provides a physical environment optimized to promote and accelerate protein folding. In Bartonella quintana (strain Toulouse) (Rochalimaea quintana), this protein is Chaperonin GroEL.